The sequence spans 652 residues: DNA ligase (652 aa).

Residues 29-33 (DAEYD), 78-79 (SL), and E107 each bind NAD(+). The N6-AMP-lysine intermediate role is filled by K109. NAD(+)-binding residues include R130, E164, K278, and K302. Zn(2+) contacts are provided by C395, C398, C413, and C418. Residues 577 to 652 (TDDAILSGKT…VKDEAWLLDL (76 aa)) enclose the BRCT domain.

It belongs to the NAD-dependent DNA ligase family. LigA subfamily. Requires Mg(2+) as cofactor. Mn(2+) is required as a cofactor.

It catalyses the reaction NAD(+) + (deoxyribonucleotide)n-3'-hydroxyl + 5'-phospho-(deoxyribonucleotide)m = (deoxyribonucleotide)n+m + AMP + beta-nicotinamide D-nucleotide.. DNA ligase that catalyzes the formation of phosphodiester linkages between 5'-phosphoryl and 3'-hydroxyl groups in double-stranded DNA using NAD as a coenzyme and as the energy source for the reaction. It is essential for DNA replication and repair of damaged DNA. The protein is DNA ligase of Streptococcus thermophilus (strain ATCC BAA-491 / LMD-9).